A 211-amino-acid polypeptide reads, in one-letter code: Protein-L-isoaspartate O-methyltransferase (211 aa).

Ser-60 is a catalytic residue.

The protein belongs to the methyltransferase superfamily. L-isoaspartyl/D-aspartyl protein methyltransferase family.

Its subcellular location is the cytoplasm. The catalysed reaction is [protein]-L-isoaspartate + S-adenosyl-L-methionine = [protein]-L-isoaspartate alpha-methyl ester + S-adenosyl-L-homocysteine. Its function is as follows. Catalyzes the methyl esterification of L-isoaspartyl residues in peptides and proteins that result from spontaneous decomposition of normal L-aspartyl and L-asparaginyl residues. It plays a role in the repair and/or degradation of damaged proteins. In Pseudomonas fluorescens (strain ATCC BAA-477 / NRRL B-23932 / Pf-5), this protein is Protein-L-isoaspartate O-methyltransferase.